Here is a 114-residue protein sequence, read N- to C-terminus: UPF0342 protein SE_1526 (114 aa).

Belongs to the UPF0342 family.

The polypeptide is UPF0342 protein SE_1526 (Staphylococcus epidermidis (strain ATCC 12228 / FDA PCI 1200)).